The primary structure comprises 541 residues: Membrane protein insertase YidC (541 aa).

5 helical membrane passes run 7–27 (LLFMALLFISFLIYQQWQVDY), 345–365 (LVQNWGLAIIGVTLVVKAVLY), 415–435 (LGGCLPILLQMPIFIALYWTF), 453–473 (LSAQDPYFILPILMGASMFLL), and 492–512 (FMPLIFMVFFLFFPAGLVLYW).

It belongs to the OXA1/ALB3/YidC family. Type 1 subfamily. Interacts with the Sec translocase complex via SecD. Specifically interacts with transmembrane segments of nascent integral membrane proteins during membrane integration.

The protein localises to the cell inner membrane. Functionally, required for the insertion and/or proper folding and/or complex formation of integral membrane proteins into the membrane. Involved in integration of membrane proteins that insert both dependently and independently of the Sec translocase complex, as well as at least some lipoproteins. Aids folding of multispanning membrane proteins. This chain is Membrane protein insertase YidC, found in Histophilus somni (strain 2336) (Haemophilus somnus).